The sequence spans 652 residues: DNA ligase (652 aa).

NAD(+) is bound by residues 29 to 33 (DSEYD), 78 to 79 (SL), and glutamate 107. The active-site N6-AMP-lysine intermediate is lysine 109. NAD(+)-binding residues include arginine 130, glutamate 164, lysine 278, and lysine 302. Zn(2+) contacts are provided by cysteine 395, cysteine 398, cysteine 413, and cysteine 418. Positions 577–652 (VADAALSGLT…VRDEAWLESL (76 aa)) constitute a BRCT domain.

It belongs to the NAD-dependent DNA ligase family. LigA subfamily. The cofactor is Mg(2+). Mn(2+) serves as cofactor.

It carries out the reaction NAD(+) + (deoxyribonucleotide)n-3'-hydroxyl + 5'-phospho-(deoxyribonucleotide)m = (deoxyribonucleotide)n+m + AMP + beta-nicotinamide D-nucleotide.. Its function is as follows. DNA ligase that catalyzes the formation of phosphodiester linkages between 5'-phosphoryl and 3'-hydroxyl groups in double-stranded DNA using NAD as a coenzyme and as the energy source for the reaction. It is essential for DNA replication and repair of damaged DNA. In Streptococcus pneumoniae serotype 2 (strain D39 / NCTC 7466), this protein is DNA ligase.